The primary structure comprises 534 residues: Importin subunit alpha-1b (534 aa).

Residues 1–58 (MSLRPSERAEVRRSRYKVAVDADEGRRRREDNMVEIRKSRREESLLKKRRDGLPAAAA) enclose the IBB domain. ARM repeat units lie at residues 111-151 (SPPI…NIAS), 154-193 (SDNT…NVAG), 196-236 (PKCR…NFCR), 238-277 (KPQP…YLSD), 280-319 (NDKI…NIVT), 322-362 (DMQT…NITA), 365-404 (REQI…NATS), and 408-447 (HDQI…NILK). The tract at residues 505-534 (DAMPSGDNAQNGFNFGNQQPNVPSGGFNFG) is disordered. Residues 514–523 (QNGFNFGNQQ) show a composition bias toward low complexity.

The protein belongs to the importin alpha family. As to quaternary structure, forms a complex with importin subunit beta-1. The whole complex, most stable and composed of importin alpha and importin beta, is referred to as PTAC or pore targeting complex. As to expression, highly expressed in root and weakly in callus, etiolated leaf and green leaf.

The protein localises to the cytoplasm. It localises to the perinuclear region. Functionally, functions in nuclear protein import. Binds specifically and directly to substrates containing either a simple or bipartite NLS motif. Promotes docking of import substrates to the nuclear envelope. In conjunction with importin beta-1, mediates the nuclear envelope docking, and the subsequent translocation into the nucleus of the constitutive morphogenetic 1 (COP1) protein containing bipartite NLS motif. This Oryza sativa subsp. japonica (Rice) protein is Importin subunit alpha-1b.